The following is a 142-amino-acid chain: Universal stress protein G (142 aa).

The protein belongs to the universal stress protein A family.

The protein is Universal stress protein G (uspG) of Salmonella typhi.